We begin with the raw amino-acid sequence, 545 residues long: Intercellular adhesion molecule 1 (545 aa).

The first 27 residues, 1-27 (MASTRARPMLPLLLVLVAVVIPGPVGA), serve as a signal peptide directing secretion. At 28-492 (QVSIHPTEAF…HLTVLYHDQN (465 aa)) the chain is on the extracellular side. Ig-like C2-type domains are found at residues 41–103 (GGSV…QSSA) and 128–193 (GKNL…LDLR). N-linked (GlcNAc...) asparagine glycosylation is present at Asn-47. Intrachain disulfides connect Cys-48/Cys-92, Cys-52/Cys-96, and Cys-135/Cys-186. The N-linked (GlcNAc...) asparagine glycan is linked to Asn-154. Residues 177–179 (RGD) carry the Cell attachment site motif. 2 N-linked (GlcNAc...) asparagine glycosylation sites follow: Asn-183 and Asn-202. Positions 230–297 (GTQQKFLCSL…LRCVLELADQ (68 aa)) constitute an Ig-like C2-type 3 domain. A disulfide bridge connects residues Cys-237 and Cys-290. Asn-309, Asn-344, Asn-396, Asn-417, Asn-439, and Asn-464 each carry an N-linked (GlcNAc...) asparagine glycan. Residues 325-389 (GDQVTVKCEA…FFCSAALEVD (65 aa)) enclose the Ig-like C2-type 4 domain. Cys-332 and Cys-382 form a disulfide bridge. The disordered stretch occupies residues 343-365 (LNSTSPRPPTSQGTSPRPPTSQI). 3 cysteine pairs are disulfide-bonded: Cys-414/Cys-430, Cys-430/Cys-469, and Cys-442/Cys-469. The Ig-like C2-type 5 domain occupies 423–476 (GSQQTLTCQPQGNPAPNLTCSRKADGVPLPIGMVKSVKREMNGTYKCRAFSSRG). A helical transmembrane segment spans residues 493–517 (TWVIIVGVLVLIIAGFVIVASIYTY). Residues 518-545 (YRQRKIRIYKLQKAQEEALKLKVQAPPP) are Cytoplasmic-facing.

The protein belongs to the immunoglobulin superfamily. ICAM family. As to quaternary structure, homodimer. Interacts with MUC1 and promotes cell aggregation in epithelial cells. Interacts with ARHGEF26/SGEF. Interacts (on T cell side) with CD81, CD247 and CD9 at immunological synapses between antigen-presenting cells and T cells. In terms of processing, monoubiquitinated, which is promoted by MARCH9 and leads to endocytosis.

The protein localises to the membrane. ICAM proteins are ligands for the leukocyte adhesion protein LFA-1 (integrin alpha-L/beta-2). During leukocyte trans-endothelial migration, ICAM1 engagement promotes the assembly of endothelial apical cups through ARHGEF26/SGEF and RHOG activation. The sequence is that of Intercellular adhesion molecule 1 (Icam1) from Rattus norvegicus (Rat).